The sequence spans 440 residues: Protein C-ets-1 (440 aa).

Lysine 8 and lysine 15 each carry N6-acetyllysine; alternate. Glycyl lysine isopeptide (Lys-Gly) (interchain with G-Cter in SUMO2); alternate cross-links involve residues lysine 8 and lysine 15. A Glycyl lysine isopeptide (Lys-Gly) (interchain with G-Cter in SUMO); alternate cross-link involves residue lysine 15. Threonine 38 carries the phosphothreonine; by MAPK modification. Positions 51–136 (ATFSGFTKEQ…EHLEILQKED (86 aa)) constitute a PNT domain. The tract at residues 130 to 243 (EILQKEDVKP…DNMCLGRASR (114 aa)) is activation domain; required for transcription activation. A Glycyl lysine isopeptide (Lys-Gly) (interchain with G-Cter in SUMO2) cross-link involves residue lysine 138. The residue at position 223 (tyrosine 223) is a Phosphotyrosine. Residue lysine 227 forms a Glycyl lysine isopeptide (Lys-Gly) (interchain with G-Cter in SUMO) linkage. At serine 251 the chain carries Phosphoserine; by CaMK2. Serine 254 is subject to Phosphoserine. Threonine 265 is modified (phosphothreonine). Serine 267 and serine 270 each carry phosphoserine. Phosphoserine; by CaMK2 is present on residues serine 282 and serine 285. The tract at residues 304-312 (FKDYVRDRA) is helix HI-1. Lysine 305 is subject to N6-acetyllysine. The interval 323 to 330 (AAALAGYT) is helix HI-2. The ETS DNA-binding region spans 335–415 (IQLWQFLLEL…AGKRYVYRFV (81 aa)). The tract at residues 418–422 (LQSLL) is helix H4. Residues 426–432 (PEELHAM) are helix H5.

It belongs to the ETS family. Binds DNA as a homodimer; homodimerization is required for transcription activation. Interacts with MAF and MAFB. Interacts with PAX5; the interaction alters DNA-binding properties. Interacts with DAXX. Interacts with UBE2I. Interacts with SP100; the interaction is direct and modulates ETS1 transcriptional activity. In terms of processing, phosphorylation at Ser-251, Ser-282 and Ser-285 by CaMK2/CaMKII in response to calcium signaling decreases affinity for DNA: an increasing number of phosphoserines causes DNA-binding to become progressively weaker. Sumoylated on Lys-15 and Lys-227, preferentially with SUMO2; which inhibits transcriptional activity. Post-translationally, ubiquitinated; which induces proteasomal degradation.

The protein localises to the nucleus. Its subcellular location is the cytoplasm. Its activity is regulated as follows. Autoinhibited by a module composed of four alpha helices (HI-1, HI-2, H4, and H5) that flank the DNA-binding ETS domain, reducing the affinity for DNA. Phosphorylation by CaMK2/CaMKII in response to calcium signaling decreases affinity for DNA. In terms of biological role, transcription factor. Directly controls the expression of cytokine and chemokine genes in a wide variety of different cellular contexts. May control the differentiation, survival and proliferation of lymphoid cells. May also regulate angiogenesis through regulation of expression of genes controlling endothelial cell migration and invasion. This Mus musculus (Mouse) protein is Protein C-ets-1 (Ets1).